The primary structure comprises 312 residues: Olfactory receptor 2M3 (312 aa).

Over 1–25 (MARENSTFNSDFILLGIFNHSPTHT) the chain is Extracellular. An N-linked (GlcNAc...) asparagine glycan is attached at asparagine 5. A helical membrane pass occupies residues 26 to 49 (FLFFLVLAIFSVAFMGNSVMVLLI). At 50-57 (YLDTQLHT) the chain is on the cytoplasmic side. Residues 58–79 (PMYLLLSQLSLMDLMLICTTVP) form a helical membrane-spanning segment. Over 80-100 (KMAFNYLSGSKSISMAGCATQ) the chain is Extracellular. Cysteine 97 and cysteine 189 are disulfide-bonded. A helical transmembrane segment spans residues 101–120 (IFFYTSLLGSECFLLAVMAY). Residues 121–139 (DRYTAICHPLRYTNLMSPK) lie on the Cytoplasmic side of the membrane. A helical transmembrane segment spans residues 140–158 (ICGLMTAFSWILGSTDGII). Residues 159–195 (DVVATFSFSYCGSREIAHFFCDFPSLLILSCSDTSIF) lie on the Extracellular side of the membrane. Residues 196-219 (EKILFICCIVMIVFPVAIIIASYA) traverse the membrane as a helical segment. Residues 220–236 (RVILAVIHMGSGEGRRK) lie on the Cytoplasmic side of the membrane. A helical membrane pass occupies residues 237-259 (AFTTCSSHLLVVGMYYGAALFMY). At 260–272 (IRPTSDRSPTQDK) the chain is on the extracellular side. The helical transmembrane segment at 273 to 292 (MVSVFYTILTPMLNPLIYSL) threads the bilayer. Over 293 to 312 (RNKEVTRAFMKILGKGKSGE) the chain is Cytoplasmic.

It belongs to the G-protein coupled receptor 1 family.

The protein localises to the cell membrane. Functionally, odorant receptor. The protein is Olfactory receptor 2M3 (OR2M3) of Homo sapiens (Human).